The chain runs to 119 residues: Large ribosomal subunit protein bL20 (119 aa).

This sequence belongs to the bacterial ribosomal protein bL20 family.

Functionally, binds directly to 23S ribosomal RNA and is necessary for the in vitro assembly process of the 50S ribosomal subunit. It is not involved in the protein synthesizing functions of that subunit. The protein is Large ribosomal subunit protein bL20 of Ruthia magnifica subsp. Calyptogena magnifica.